Reading from the N-terminus, the 310-residue chain is Olfactory receptor 2A1/2A42 (310 aa).

Over 1–24 the chain is Extracellular; that stretch reads MGENQTMVTEFLLLGFLLGPRIQM. A glycan (N-linked (GlcNAc...) asparagine) is linked at Asn-4. The chain crosses the membrane as a helical span at residues 25–48; sequence LLFGLFSLFYIFTLLGNGAILGLI. The Cytoplasmic portion of the chain corresponds to 49–56; it reads SLDSRLHT. Residues 57–78 traverse the membrane as a helical segment; the sequence is PMYFFLSHLAVVDIAYTRNTVP. Over 79-99 the chain is Extracellular; the sequence is QMLANLLHPAKPISFAGCMTQ. Cysteines 96 and 188 form a disulfide. Residues 100–119 form a helical membrane-spanning segment; sequence TFLCLSFGHSECLLLVLMSY. The Cytoplasmic portion of the chain corresponds to 120 to 138; it reads DRYVAICHPLRYSVIMTWR. The chain crosses the membrane as a helical span at residues 139–157; sequence VCITLAVTSWTCGSLLALA. The Extracellular segment spans residues 158 to 195; that stretch reads HVVLILRLPFSGPHEINHFFCEILSVLRLACADTWLNQ. Residues 196 to 218 form a helical membrane-spanning segment; it reads VVIFAACVFFLVGPPSLVLVSYS. Residues 219–235 are Cytoplasmic-facing; that stretch reads HILAAILRIQSGEGRRK. The chain crosses the membrane as a helical span at residues 236-258; that stretch reads AFSTCSSHLCVVGLFFGSAIIMY. At 259 to 271 the chain is on the extracellular side; the sequence is MAPKSRHPEEQQK. Residues 272–291 traverse the membrane as a helical segment; that stretch reads VFFLFYSFFNPTLNPLIYSL. The Cytoplasmic segment spans residues 292 to 310; the sequence is RNGEVKGALRRALGKESHS.

This sequence belongs to the G-protein coupled receptor 1 family.

Its subcellular location is the cell membrane. Functionally, odorant receptor. This is Olfactory receptor 2A1/2A42 (OR2A1) from Homo sapiens (Human).